A 350-amino-acid polypeptide reads, in one-letter code: Secreted effector protein PipB2 (350 aa).

Pentapeptide repeat domains follow at residues 162-201 (ANLT…NLSG), 202-241 (TSLG…SLLG), 247-286 (CNCS…IMEG), and 287-326 (AVLT…TLTD).

In terms of assembly, interacts with the host kinesin light chain (KLC), a subunit of the kinesin-1 motor complex.

Its subcellular location is the secreted. The protein localises to the host membrane. Its function is as follows. Effector proteins function to alter host cell physiology and promote bacterial survival in host tissues. Involved in the reorganization of late endosome/lysosome (LE/Lys) compartments in mammalian cells. Necessary and sufficient to link kinesin-1 onto the Salmonella-containing vacuole (SCV) membrane. Required for centrifugal extension of lysosomal glycoprotein-rich membrane tubules, known as Salmonella-induced filaments (Sifs), away from the SCV and toward the cell periphery. Required for virulence, but not for intracellular survival and replication in phagocytic cells. This chain is Secreted effector protein PipB2 (pipB2), found in Salmonella typhimurium (strain LT2 / SGSC1412 / ATCC 700720).